We begin with the raw amino-acid sequence, 348 residues long: Casein kinase II subunit alpha (348 aa).

In terms of domain architecture, Protein kinase spans 55–340 (YEIVRKIGRG…PLEAMEHPFF (286 aa)). Residues 61–69 (IGRGKFSEV) and K84 contribute to the ATP site. D172 acts as the Proton acceptor in catalysis.

This sequence belongs to the protein kinase superfamily. Ser/Thr protein kinase family. CK2 subfamily. In terms of assembly, tetramer of two alpha and two beta chains.

Its subcellular location is the cytoplasm. It carries out the reaction L-seryl-[protein] + ATP = O-phospho-L-seryl-[protein] + ADP + H(+). The catalysed reaction is L-threonyl-[protein] + ATP = O-phospho-L-threonyl-[protein] + ADP + H(+). In terms of biological role, casein kinases are operationally defined by their preferential utilization of acidic proteins such as caseins as substrates. The alpha chain contains the catalytic site. This chain is Casein kinase II subunit alpha, found in Theileria annulata.